The primary structure comprises 323 residues: ATP synthase gamma chain (323 aa).

Residues 215–237 form a disordered region; sequence PAGGPAKEQEQGDEGGHGAPSAA. Residues 221–230 show a composition bias toward basic and acidic residues; sequence KEQEQGDEGG.

The protein belongs to the ATPase gamma chain family. F-type ATPases have 2 components, CF(1) - the catalytic core - and CF(0) - the membrane proton channel. CF(1) has five subunits: alpha(3), beta(3), gamma(1), delta(1), epsilon(1). CF(0) has three main subunits: a, b and c.

It is found in the cell inner membrane. In terms of biological role, produces ATP from ADP in the presence of a proton gradient across the membrane. The gamma chain is believed to be important in regulating ATPase activity and the flow of protons through the CF(0) complex. This is ATP synthase gamma chain from Sorangium cellulosum (strain So ce56) (Polyangium cellulosum (strain So ce56)).